The chain runs to 389 residues: Diaminopimelate decarboxylase (389 aa).

K58 carries the post-translational modification N6-(pyridoxal phosphate)lysine. Pyridoxal 5'-phosphate-binding positions include G233 and 271 to 274 (ELGR). Substrate contacts are provided by R274, R310, Y314, E342, and Y370. Y370 contacts pyridoxal 5'-phosphate.

Belongs to the Orn/Lys/Arg decarboxylase class-II family. LysA subfamily. Homodimer. The cofactor is pyridoxal 5'-phosphate.

It catalyses the reaction meso-2,6-diaminopimelate + H(+) = L-lysine + CO2. It participates in amino-acid biosynthesis; L-lysine biosynthesis via DAP pathway; L-lysine from DL-2,6-diaminopimelate: step 1/1. Specifically catalyzes the decarboxylation of meso-diaminopimelate (meso-DAP) to L-lysine. The sequence is that of Diaminopimelate decarboxylase from Francisella tularensis subsp. holarctica (strain LVS).